A 367-amino-acid polypeptide reads, in one-letter code: Metacaspase-1 (367 aa).

Positions 47-77 (DPRTAPPPQPSSAPSPPPQIHAPPGQLPHPH) are disordered. The span at 50-73 (TAPPPQPSSAPSPPPQIHAPPGQL) shows a compositional bias: pro residues. Residues His164 and Cys220 contribute to the active site.

It belongs to the peptidase C14B family. As to quaternary structure, interacts (via N-terminus) with LSD1. Proteolytically processed; by an autocatalytic mechanism.

Functionally, cysteine protease that cleaves specifically after arginine or lysine residues. Does not cleave caspase-specific substrates. Acts as a positive regulator of cell death. Required for both oxidative stress cell death response and hypersensitive cell death response mediated by immune response. This is Metacaspase-1 (AMC1) from Arabidopsis thaliana (Mouse-ear cress).